The primary structure comprises 335 residues: Methionine import ATP-binding protein MetN (335 aa).

The region spanning 2–241 (IEFQRLHKSY…PKHVTTRRFV (240 aa)) is the ABC transporter domain. 38–45 (GHSGAGKS) contributes to the ATP binding site.

The protein belongs to the ABC transporter superfamily. Methionine importer (TC 3.A.1.24) family. The complex is composed of two ATP-binding proteins (MetN), two transmembrane proteins (MetI) and a solute-binding protein (MetQ).

It is found in the cell inner membrane. It catalyses the reaction L-methionine(out) + ATP + H2O = L-methionine(in) + ADP + phosphate + H(+). The catalysed reaction is D-methionine(out) + ATP + H2O = D-methionine(in) + ADP + phosphate + H(+). Part of the ABC transporter complex MetNIQ involved in methionine import. Responsible for energy coupling to the transport system. In Xanthomonas oryzae pv. oryzae (strain KACC10331 / KXO85), this protein is Methionine import ATP-binding protein MetN.